A 737-amino-acid polypeptide reads, in one-letter code: Transcription termination factor Rho (737 aa).

The segment at 1–396 is disordered; that stretch reads MSGPCSAHRV…ENSYLPDPTD (396 aa). Low complexity-rich tracts occupy residues 16–28, 62–86, and 101–111; these read RPTI…TRSS, ASRA…GSDA, and DAESAPTAADT. Basic and acidic residues-rich tracts occupy residues 145 to 175, 196 to 256, 266 to 279, and 286 to 324; these read PRAE…HESR, SMER…DRRD, GRPD…DRHQ, and DRSH…DRGG. A compositionally biased stretch (basic residues) spans 328-339; that stretch reads RNGRRGRNRFRR. Over residues 347–360 the composition is skewed to polar residues; it reads APISGSHAPSQGSP. The 73-residue stretch at 367 to 439 folds into the Rho RNA-BD domain; the sequence is EGTMAGWFDP…IEVQTLNDGS (73 aa). Basic and acidic residues predominate over residues 376–387; sequence PSRDGGFLRRPE. Residues 487–492, 499–504, and arginine 530 contribute to the ATP site; these read GYGQRA and RAGKTT.

The protein belongs to the Rho family. In terms of assembly, homohexamer. The homohexamer assembles into an open ring structure.

Its function is as follows. Facilitates transcription termination by a mechanism that involves Rho binding to the nascent RNA, activation of Rho's RNA-dependent ATPase activity, and release of the mRNA from the DNA template. This is Transcription termination factor Rho from Gemmatimonas aurantiaca (strain DSM 14586 / JCM 11422 / NBRC 100505 / T-27).